We begin with the raw amino-acid sequence, 346 residues long: Putative transmembrane protein ORF346 (346 aa).

The next 6 membrane-spanning stretches (helical) occupy residues 67–87, 104–124, 134–154, 156–176, 181–201, and 219–241; these read LPII…CIVY, IINP…VGLT, PPYL…SGIY, AIGD…GLFI, IILY…LCLS, and YPFS…LGSY. The tract at residues 294–346 is disordered; that stretch reads SEYPHSENGSGGSGGSGSGSGSGGSGSGGNSGSGGSGSGSSGSGGNSGSGNNG. The span at 302–346 shows a compositional bias: gly residues; sequence GSGGSGGSGSGSGSGGSGSGGNSGSGGSGSGSSGSGGNSGSGNNG.

It is found in the host membrane. The sequence is that of Putative transmembrane protein ORF346 from Acidianus bottle-shaped virus (isolate Italy/Pozzuoli) (ABV).